The primary structure comprises 353 residues: UPF0283 membrane protein YpsIP31758_1791 (353 aa).

Helical transmembrane passes span 71 to 91 (MVTA…VQWV), 101 to 121 (IALG…GSVV), and 214 to 234 (ESAL…FIAW).

It belongs to the UPF0283 family.

The protein resides in the cell inner membrane. The protein is UPF0283 membrane protein YpsIP31758_1791 of Yersinia pseudotuberculosis serotype O:1b (strain IP 31758).